Reading from the N-terminus, the 386-residue chain is Oxytocin receptor (386 aa).

Residues 1–31 form a disordered region; that stretch reads MEGVLAANWSAEAVNSSAAPPEAEGNRTAGP. The Extracellular portion of the chain corresponds to 1-38; it reads MEGVLAANWSAEAVNSSAAPPEAEGNRTAGPPQRNEAL. 3 N-linked (GlcNAc...) asparagine glycosylation sites follow: N8, N15, and N26. A helical membrane pass occupies residues 39–63; sequence ARVEVAVLCLILFLALSGNACVLLA. The Cytoplasmic segment spans residues 64 to 74; sequence LRTTRHKHSRL. A helical transmembrane segment spans residues 75–97; that stretch reads FFFMKHLSIADLVVAVFQVLPQL. The Extracellular portion of the chain corresponds to 98–113; the sequence is LWDITFRFYGPDLLCR. An intrachain disulfide couples C112 to C187. Residues 114–135 form a helical membrane-spanning segment; it reads LVKYLQVVGMFASTYLLLLMSL. The Cytoplasmic segment spans residues 136 to 154; it reads DRCLAICQPLRALRRPADR. The chain crosses the membrane as a helical span at residues 155 to 175; that stretch reads LAVLATWLGCLVASAPQVHIF. At 176–202 the chain is on the extracellular side; the sequence is SLREVADGVFDCWAVFIQPWGPKAYIT. The chain crosses the membrane as a helical span at residues 203-225; that stretch reads WITLAVYIVPVIVLAACYGLISF. The Cytoplasmic portion of the chain corresponds to 226 to 277; it reads KIWQNLRLKTAAEAAEAIAGTEGAAAGSRGRAALARVSSVKLISKAKIRTVK. The chain crosses the membrane as a helical span at residues 278-296; that stretch reads MTFIIVLAFIVCWTPFFFV. The Extracellular portion of the chain corresponds to 297-311; sequence QMWSVWDADAPKEAS. The chain crosses the membrane as a helical span at residues 312–334; that stretch reads AFIIAMLLASLNSCCNPWIYMLF. The Cytoplasmic segment spans residues 335 to 386; it reads TGHLFHELVQRFLCCSSSHLKTSRPGETSVSKKSNSSTFVLSQHSSSQKSCS. The span at 355 to 375 shows a compositional bias: polar residues; that stretch reads KTSRPGETSVSKKSNSSTFVL. Residues 355–386 form a disordered region; sequence KTSRPGETSVSKKSNSSTFVLSQHSSSQKSCS. 2 positions are modified to phosphoserine: S368 and S370. The segment covering 376-386 has biased composition (low complexity); it reads SQHSSSQKSCS.

It belongs to the G-protein coupled receptor 1 family. Vasopressin/oxytocin receptor subfamily.

It localises to the cell membrane. In terms of biological role, receptor for oxytocin. The activity of this receptor is mediated by G proteins which activate a phosphatidylinositol-calcium second messenger system. In Sus scrofa (Pig), this protein is Oxytocin receptor (OXTR).